The sequence spans 45 residues: Thymosin beta-15A (45 aa).

2 stretches are compositionally biased toward basic and acidic residues: residues 1–27 and 35–45; these read MSDK…EEKN and IQQEKECVQTS. A disordered region spans residues 1–45; that stretch reads MSDKPDLSEVEKFDRSKLKKTNTEEKNTLPSKETIQQEKECVQTS.

Belongs to the thymosin beta family. Neuroblastoma-specific.

It localises to the cytoplasm. The protein localises to the cytoskeleton. Its function is as follows. Plays an important role in the organization of the cytoskeleton. Binds to and sequesters actin monomers (G actin) and therefore inhibits actin polymerization. In Homo sapiens (Human), this protein is Thymosin beta-15A (TMSB15A).